Consider the following 474-residue polypeptide: Glycogen synthase (474 aa).

Position 15 (Lys15) interacts with ADP-alpha-D-glucose.

Belongs to the glycosyltransferase 1 family. Bacterial/plant glycogen synthase subfamily.

It carries out the reaction [(1-&gt;4)-alpha-D-glucosyl](n) + ADP-alpha-D-glucose = [(1-&gt;4)-alpha-D-glucosyl](n+1) + ADP + H(+). The protein operates within glycan biosynthesis; glycogen biosynthesis. Its function is as follows. Synthesizes alpha-1,4-glucan chains using ADP-glucose. This chain is Glycogen synthase, found in Chlamydia muridarum (strain MoPn / Nigg).